The primary structure comprises 273 residues: Imidazole glycerol phosphate synthase subunit HisF (273 aa).

Catalysis depends on residues D11 and D134.

Belongs to the HisA/HisF family. Heterodimer of HisH and HisF.

The protein resides in the cytoplasm. The catalysed reaction is 5-[(5-phospho-1-deoxy-D-ribulos-1-ylimino)methylamino]-1-(5-phospho-beta-D-ribosyl)imidazole-4-carboxamide + L-glutamine = D-erythro-1-(imidazol-4-yl)glycerol 3-phosphate + 5-amino-1-(5-phospho-beta-D-ribosyl)imidazole-4-carboxamide + L-glutamate + H(+). It participates in amino-acid biosynthesis; L-histidine biosynthesis; L-histidine from 5-phospho-alpha-D-ribose 1-diphosphate: step 5/9. In terms of biological role, IGPS catalyzes the conversion of PRFAR and glutamine to IGP, AICAR and glutamate. The HisF subunit catalyzes the cyclization activity that produces IGP and AICAR from PRFAR using the ammonia provided by the HisH subunit. The chain is Imidazole glycerol phosphate synthase subunit HisF from Methanosarcina mazei (strain ATCC BAA-159 / DSM 3647 / Goe1 / Go1 / JCM 11833 / OCM 88) (Methanosarcina frisia).